The chain runs to 107 residues: Nucleoid-associated protein Mlg_1509 (107 aa).

The protein belongs to the YbaB/EbfC family. In terms of assembly, homodimer.

The protein resides in the cytoplasm. Its subcellular location is the nucleoid. Its function is as follows. Binds to DNA and alters its conformation. May be involved in regulation of gene expression, nucleoid organization and DNA protection. The polypeptide is Nucleoid-associated protein Mlg_1509 (Alkalilimnicola ehrlichii (strain ATCC BAA-1101 / DSM 17681 / MLHE-1)).